Here is a 447-residue protein sequence, read N- to C-terminus: N-succinylarginine dihydrolase (447 aa).

Substrate is bound by residues 19 to 28 (AGLSFGNEAS), N110, and 137 to 138 (HR). E174 is an active-site residue. R212 is a substrate binding site. Residue H248 is part of the active site. The substrate site is built by D250 and N359. Catalysis depends on C365, which acts as the Nucleophile.

This sequence belongs to the succinylarginine dihydrolase family. As to quaternary structure, homodimer.

It catalyses the reaction N(2)-succinyl-L-arginine + 2 H2O + 2 H(+) = N(2)-succinyl-L-ornithine + 2 NH4(+) + CO2. It participates in amino-acid degradation; L-arginine degradation via AST pathway; L-glutamate and succinate from L-arginine: step 2/5. Catalyzes the hydrolysis of N(2)-succinylarginine into N(2)-succinylornithine, ammonia and CO(2). The chain is N-succinylarginine dihydrolase from Escherichia coli (strain ATCC 8739 / DSM 1576 / NBRC 3972 / NCIMB 8545 / WDCM 00012 / Crooks).